Here is a 527-residue protein sequence, read N- to C-terminus: Glucose-6-phosphate isomerase (527 aa).

Catalysis depends on Glu323, which acts as the Proton donor. Catalysis depends on residues His352 and Lys454.

Belongs to the GPI family.

It localises to the cytoplasm. It catalyses the reaction alpha-D-glucose 6-phosphate = beta-D-fructose 6-phosphate. The protein operates within carbohydrate biosynthesis; gluconeogenesis. Its pathway is carbohydrate degradation; glycolysis; D-glyceraldehyde 3-phosphate and glycerone phosphate from D-glucose: step 2/4. Catalyzes the reversible isomerization of glucose-6-phosphate to fructose-6-phosphate. This chain is Glucose-6-phosphate isomerase, found in Prochlorococcus marinus (strain MIT 9312).